The primary structure comprises 655 residues: RalA-binding protein 1-A (655 aa).

A disordered region spans residues 1 to 153 (MTECFLPPAS…KKSKDLTAAD (153 aa)). Residues 52 to 68 (DILHEPPDIVSEDEKDH) show a composition bias toward basic and acidic residues. 69 to 74 (GKKKGK) is an ATP binding site. Composition is skewed to basic residues over residues 69-79 (GKKKGKFKKKE) and 102-118 (KIKR…PSFS). The tract at residues 102–119 (KIKRSKGIHVFKKPSFSK) is nuclear localization signal. Residues 119 to 150 (KKKEKDFKIKEKPKEEKHKEDKHKEKKSKDLT) are compositionally biased toward basic and acidic residues. 2 tandem repeats follow at residues 133–137 (EEKHK) and 138–142 (EDKHK). Residues 133–142 (EEKHKEDKHK) are 2 X 5 AA tandem repeats of E-[D/E]-K-H-K. The interval 149 to 214 (LTAADVVKQW…PLVFRECIDF (66 aa)) is mediates association with membranes and could form transmembrane domains. In terms of domain architecture, Rho-GAP spans 187–383 (IPLIEAAERT…PLRWSNMATM (197 aa)). The tract at residues 398–495 (RRQEFLLNCL…LTEQEELVAM (98 aa)) is mediates interaction with RALA and RALB. An ATP-binding site is contributed by 413 to 420 (AGVKDLSK). A required to maintain nuclear localization region spans residues 494 to 510 (AMEQYLRRQIATEKEEI). The interval 496-655 (EQYLRRQIAT…GKKLSSETLI (160 aa)) is mediates interaction with REPS1 and REPS2. Disordered regions lie at residues 520 to 548 (IQSR…EEEL) and 600 to 655 (LQEE…ETLI). Residues 532–548 (EEYSSESESESEDEEEL) show a composition bias toward acidic residues. The span at 619–630 (NLPETKAPKDQP) shows a compositional bias: basic and acidic residues.

Interacts with the active, GTP-bound form of ralB and ralA.

It is found in the cell membrane. It localises to the cytoplasm. The protein resides in the cytosol. The protein localises to the cytoskeleton. Its subcellular location is the spindle pole. It is found in the nucleus. It localises to the mitochondrion. The protein resides in the cell projection. The protein localises to the lamellipodium. It catalyses the reaction an S-substituted glutathione(in) + ATP + H2O = an S-substituted glutathione(out) + ADP + phosphate + H(+). The catalysed reaction is ATP + H2O + xenobioticSide 1 = ADP + phosphate + xenobioticSide 2.. The enzyme catalyses leukotriene C4(in) + ATP + H2O = leukotriene C4(out) + ADP + phosphate + H(+). Multifunctional protein that functions as a downstream effector of ralA and ralB. As a GTPase-activating protein/GAP can inactivate CDC42 and RAC1 by stimulating their GTPase activity. As part of the Ral signaling pathway, may also regulate ligand-dependent EGF and insulin receptors-mediated endocytosis. During mitosis, may act as a scaffold protein in the phosphorylation of EPSIN/EPN1 by the mitotic kinase cyclin B-CDK1, preventing endocytosis during that phase of the cell cycle. During mitosis, also controls mitochondrial fission as an effector of ralA. Recruited to mitochondrion by ralA, acts as a scaffold to foster the mitotic kinase cyclin B-CDK1-mediated phosphorylation and activation of DNM1L. Acts on the cytoskeleton, to regulate pigment distribution and to regulate gastrulation. Functionally, could also function as a primary ATP-dependent active transporter for glutathione conjugates of electrophiles. May also actively catalyze the efflux of a wide range of substrates including xenobiotics like doxorubicin (DOX) contributing to cell multidrug resistance. This is RalA-binding protein 1-A (ralbp1-a) from Xenopus laevis (African clawed frog).